The chain runs to 318 residues: Putative 2-hydroxyacid dehydrogenase SH0752 (318 aa).

NAD(+) is bound by residues 155–156 (EI), 234–236 (AGR), and Asp260. Arg236 is a catalytic residue. The active site involves Glu265. His283 acts as the Proton donor in catalysis. 283 to 286 (HIGN) contacts NAD(+).

This sequence belongs to the D-isomer specific 2-hydroxyacid dehydrogenase family.

This is Putative 2-hydroxyacid dehydrogenase SH0752 from Staphylococcus haemolyticus (strain JCSC1435).